The following is a 746-amino-acid chain: Ferric enterobactin receptor (746 aa).

Positions 1–25 (MSSRALPAVPFLLLSSCLLANAVHA) are cleaved as a signal peptide. A TonB box motif is present at residues 39-44 (QTVVAT). In terms of domain architecture, TBDR plug spans 47–174 (EETKQAPGVS…AGGVVNIITK (128 aa)). Disordered stretches follow at residues 82–102 (VNLT…IDIR), 235–254 (GHES…GREG), and 397–424 (QKLD…KNRS). Residues 84 to 98 (LTGNSSSGQRGNNRQ) show a composition bias toward polar residues. A TBDR beta-barrel domain is found at 179-746 (ETHGNLSVYS…TFYTSLTASF (568 aa)). Positions 402-411 (PSSNTQNTEE) are enriched in polar residues. A TonB C-terminal box motif is present at residues 729 to 746 (ATYNEPGRTFYTSLTASF).

Belongs to the TonB-dependent receptor family.

The protein localises to the cell outer membrane. In terms of biological role, specific receptor for the siderophore ferric enterobactin. This is Ferric enterobactin receptor (pfeA) from Pseudomonas aeruginosa (strain ATCC 15692 / DSM 22644 / CIP 104116 / JCM 14847 / LMG 12228 / 1C / PRS 101 / PAO1).